The primary structure comprises 127 residues: Modulator protein MzrA (127 aa).

Over methionine 1 to glutamine 10 the chain is Cytoplasmic. A helical transmembrane segment spans residues leucine 11 to leucine 31. Topologically, residues arginine 32 to glycine 127 are periplasmic.

The protein belongs to the MzrA family. As to quaternary structure, interacts with EnvZ.

It is found in the cell inner membrane. Modulates the activity of the EnvZ/OmpR two-component regulatory system, probably by directly modulating EnvZ enzymatic activity and increasing stability of phosphorylated OmpR. The polypeptide is Modulator protein MzrA (Salmonella agona (strain SL483)).